A 248-amino-acid polypeptide reads, in one-letter code: Putative imidazole glycerol phosphate synthase subunit hisF2 (248 aa).

Residue Asp129 is part of the active site.

It belongs to the HisA/HisF family. Heterodimer of HisH and HisF.

The protein resides in the cytoplasm. It carries out the reaction 5-[(5-phospho-1-deoxy-D-ribulos-1-ylimino)methylamino]-1-(5-phospho-beta-D-ribosyl)imidazole-4-carboxamide + L-glutamine = D-erythro-1-(imidazol-4-yl)glycerol 3-phosphate + 5-amino-1-(5-phospho-beta-D-ribosyl)imidazole-4-carboxamide + L-glutamate + H(+). Its pathway is amino-acid biosynthesis; L-histidine biosynthesis; L-histidine from 5-phospho-alpha-D-ribose 1-diphosphate: step 5/9. In terms of biological role, IGPS catalyzes the conversion of PRFAR and glutamine to IGP, AICAR and glutamate. The HisF subunit catalyzes the cyclization activity that produces IGP and AICAR from PRFAR using the ammonia provided by the HisH subunit. In Campylobacter jejuni subsp. jejuni serotype O:2 (strain ATCC 700819 / NCTC 11168), this protein is Putative imidazole glycerol phosphate synthase subunit hisF2 (hisF2).